We begin with the raw amino-acid sequence, 143 residues long: MAAVLGLCGGLGKRKFTRFPTAFVCLTNSGTRAVLWRSCSQCKQVTSSEDLPIPMENPYKEPLKKCILCEKRVDYKNVQLLSQFISPFTGCIYGRHITGLCGKKQREITKAIKRAQILGFMPVTYKDPAYLKDPKVCNIRYRE.

This sequence belongs to the bacterial ribosomal protein bS18 family. In terms of assembly, component of the mitochondrial ribosome small subunit (28S) which comprises a 12S rRNA and about 30 distinct proteins.

The protein localises to the mitochondrion. The sequence is that of Small ribosomal subunit protein bS18m (MRPS18C) from Bos taurus (Bovine).